A 176-amino-acid polypeptide reads, in one-letter code: Ribosome rescue factor SmrB (176 aa).

One can recognise a Smr domain in the interval 98 to 173 (LDLHGLNQYQ…NDAAIMVIIE (76 aa)).

The protein belongs to the SmrB family. In terms of assembly, associates with collided ribosomes, but not with correctly translating polysomes.

Its function is as follows. Acts as a ribosome collision sensor. Detects stalled/collided disomes (pairs of ribosomes where the leading ribosome is stalled and a second ribosome has collided with it) and endonucleolytically cleaves mRNA at the 5' boundary of the stalled ribosome. Stalled/collided disomes form a new interface (primarily via the 30S subunits) that binds SmrB. Cleaved mRNA becomes available for tmRNA ligation, leading to ribosomal subunit dissociation and rescue of stalled ribosomes. This chain is Ribosome rescue factor SmrB, found in Buchnera aphidicola subsp. Schizaphis graminum (strain Sg).